Reading from the N-terminus, the 465-residue chain is A-type ATP synthase subunit B (465 aa).

This sequence belongs to the ATPase alpha/beta chains family. As to quaternary structure, has multiple subunits with at least A(3), B(3), C, D, E, F, H, I and proteolipid K(x).

The protein localises to the cell membrane. In terms of biological role, component of the A-type ATP synthase that produces ATP from ADP in the presence of a proton gradient across the membrane. The B chain is a regulatory subunit. This is A-type ATP synthase subunit B from Sulfurisphaera tokodaii (strain DSM 16993 / JCM 10545 / NBRC 100140 / 7) (Sulfolobus tokodaii).